The following is a 907-amino-acid chain: Glutamate receptor 1 (907 aa).

Residues 1-18 (MPYIFAFFCTGFLGAVVG) form the signal peptide. At 19 to 536 (ANFPNNIQIG…GVFSFLDPLA (518 aa)) the chain is on the extracellular side. N-linked (GlcNAc...) asparagine glycans are attached at residues N63, N249, N257, N363, N401, and N406. A disulfide bond links C75 and C323. Residues P492, T494, and R499 each contribute to the L-glutamate site. A helical transmembrane segment spans residues 537–557 (YEIWMCIVFAYIGVSVVLFLV). Residues 558–584 (SRFSPYEWHSEEFEEGRDQTTSDQSNE) lie on the Cytoplasmic side of the membrane. An intramembrane region (helical; Pore-forming) is located at residues 585–600 (FGIFNSLWFSLGAFMQ). Residues 601-603 (QGC) lie within the membrane without spanning it. Residue C603 is the site of S-palmitoyl cysteine attachment. The Cytoplasmic portion of the chain corresponds to 604-609 (DISPRS). The chain crosses the membrane as a helical span at residues 610–630 (LSGRIVGGVWWFFTLIIISSY). The Extracellular portion of the chain corresponds to 631–805 (TANLAAFLTV…DKTSALSLSN (175 aa)). S645 bears the Phosphoserine mark. L-glutamate is bound by residues S668 and T669. S710 carries the post-translational modification Phosphoserine. An L-glutamate-binding site is contributed by E719. A disulfide bridge connects residues C732 and C787. Residues 806–826 (VAGVFYILIGGLGLAMLVALI) traverse the membrane as a helical segment. The Cytoplasmic segment spans residues 827 to 907 (EFCYKSRSES…SGMPLGATGL (81 aa)). The S-palmitoyl cysteine moiety is linked to residue C829. Residues S849 and S863 each carry the phosphoserine modification. The interval 857-881 (STLPRNSGAGASGGSGSGENGRVVS) is disordered. Positions 866–875 (GASGGSGSGE) are enriched in gly residues. Positions 904–907 (ATGL) match the PDZ-binding motif.

The protein belongs to the glutamate-gated ion channel (TC 1.A.10.1) family. GRIA1 subfamily. In terms of assembly, homotetramer or heterotetramer of pore-forming glutamate receptor subunits. Heteromeric assembly can be the result of both receptor subtype and flip or flop form and according the composition, one partner can be dominant with respect to the fast desensitizing current component, whereas the other can determine the steady-state component. Tetramers may be formed by the dimerization of dimers. Found in a complex with GRIA2, GRIA3, GRIA4, CNIH2, CNIH3, CACNG2, CACNG3, CACNG4, CACNG5, CACNG7 and CACNG8. Interacts with HIP1 and RASGRF2. Interacts with SYNDIG1 and GRIA2. Interacts with DLG1 (via C-terminus). Interacts with LRFN1. Interacts with PRKG2. Interacts with CNIH2 and CACNG2. Interacts with CACNG5; this interaction modulates the gating. Interacts (via C-terminus) with PDLIM4 (via LIM domain); this interaction as well as the interaction of PDLIM4 with alpha-actinin is required for their colocalization in early endosomes. Interacts with SNX27 (via PDZ domain); the interaction is required for recycling to the plasma membrane when endocytosed and prevent degradation in lysosomes. Interacts (via PDZ-binding motif) with SHANK3 (via PDZ domain). Interacts with CACNG3; associates GRIA1 with the adapter protein complex 4 (AP-4) to target GRIA1 to the somatodendritic compartment of neurons. Interacts with CACNG2; this interaction mediates traffick to the plasma membrane and modulation of desensitization. Interacts with CNIH2 and CNIH3; this interaction promotes expression at the plasma membrane and extensively modulates their gating properties by slowing deactivation and desensitization kinetics. Found in a complex with GRIA2, GRIA3, GRIA4, DLG4, CACNG8 and CNIH2. In terms of processing, phosphorylated at Ser-645. Phosphorylated at Ser-710 by PKC. Phosphorylated at Ser-849 by PKC, PKA and CAMK2. Phosphorylated at Ser-863 by PKC, PKA and PRKG2. Phosphorylation of Ser-863 is reduced by induction of long-term depression and increased by induction of long-term potentiation. Palmitoylated. Depalmitoylated by CPT1C and upon L-glutamate stimulation. ZDHHC3/GODZ specifically palmitoylates Cys-603, which leads to Golgi retention and decreased cell surface expression. In contrast, Cys-829 palmitoylation does not affect cell surface expression but regulates stimulation-dependent endocytosis. Expressed in the outer plexiform layer of the retina of the eye (at protein level). Expressed in the forebrain and hippocampus (at protein level).

The protein resides in the cell membrane. It localises to the endoplasmic reticulum membrane. Its subcellular location is the postsynaptic cell membrane. It is found in the postsynaptic density membrane. The protein localises to the cell projection. The protein resides in the dendrite. It localises to the dendritic spine. Its subcellular location is the early endosome membrane. It is found in the recycling endosome membrane. The protein localises to the presynapse. The protein resides in the synapse. It carries out the reaction Ca(2+)(in) = Ca(2+)(out). The enzyme catalyses Na(+)(in) = Na(+)(out). It catalyses the reaction Mg(2+)(in) = Mg(2+)(out). The catalysed reaction is Li(+)(in) = Li(+)(out). It carries out the reaction K(+)(in) = K(+)(out). The enzyme catalyses Sr(2+)(in) = Sr(2+)(out). Functionally, ionotropic glutamate receptor that functions as a ligand-gated cation channel, gated by L-glutamate and glutamatergic agonists such as alpha-amino-3-hydroxy-5-methyl-4-isoxazolepropionic acid (AMPA), quisqualic acid, and kainic acid. L-glutamate acts as an excitatory neurotransmitter at many synapses in the central nervous system. Binding of the excitatory neurotransmitter L-glutamate induces a conformation change, leading to the opening of the cation channel, and thereby converts the chemical signal to an electrical impulse upon entry of monovalent and divalent cations such as sodium and calcium. The receptor then desensitizes rapidly and enters in a transient inactive state, characterized by the presence of bound agonist. In the presence of CACNG2 or CACNG4 or CACNG7 or CACNG8, shows resensitization which is characterized by a delayed accumulation of current flux upon continued application of L-glutamate. Calcium (Ca(2+)) permeability depends on subunits composition and, heteromeric channels containing edited GRIA2 subunit are calcium-impermeable. Also permeable to other divalents cations such as strontium(2+) and magnesium(2+) and monovalent cations such as potassium(1+) and lithium(1+). The protein is Glutamate receptor 1 of Mus musculus (Mouse).